The sequence spans 223 residues: Carnitine transport permease protein OpuCD (223 aa).

An ABC transmembrane type-1 domain is found at 22–202 (FWRHFLMSAY…VMAILADVLL (181 aa)). Transmembrane regions (helical) follow at residues 27 to 47 (LMSA…GVYI), 63 to 83 (IIQT…MGLG), 87 to 107 (VVLS…YTGI), 148 to 168 (ALVI…GGLG), and 182 to 202 (AIIL…DVLL).

It belongs to the binding-protein-dependent transport system permease family. As to quaternary structure, the complex is composed of two ATP-binding proteins (OpuCA), two transmembrane proteins (OpuCB and OpuCD) and a solute-binding protein (OpuCC).

It localises to the cell membrane. Its function is as follows. Part of the ABC transporter complex OpuCABCD involved in carnitine uptake. Probably responsible for the translocation of the substrate across the membrane. Involved, with BetL and GbuABC, in osmoprotection and cryoprotection of Listeria. Can also mediate weak glycine betaine transport. The polypeptide is Carnitine transport permease protein OpuCD (opuCD) (Listeria monocytogenes serotype 1/2a (strain 10403S)).